The sequence spans 101 residues: Protein Tat (101 aa).

Residues 1-20 (MEVVDPNLDPWKHPGSQPET) form a disordered region. The tract at residues 1–24 (MEVVDPNLDPWKHPGSQPETPCNK) is interaction with human CREBBP. Residues 1–48 (MEVVDPNLDPWKHPGSQPETPCNKCYCKKCCFHCQLCFTRKGLGISYG) form a transactivation region. Zn(2+)-binding residues include Cys-22, Cys-25, and Cys-27. Residues 22–37 (CNKCYCKKCCFHCQLC) are cysteine-rich. Lys-28 carries the post-translational modification N6-acetyllysine; by host PCAF. Cys-30, His-33, Cys-34, and Cys-37 together coordinate Zn(2+). A core region spans residues 38 to 48 (FTRKGLGISYG). Residues 47 to 101 (YGRKKRRQRRRTPQSGEVHQDPVSKQPLSQTRGDPKGPEESKKKVESKTKTDPSD) form a disordered region. The span at 48–58 (GRKKRRQRRRT) shows a compositional bias: basic residues. The short motif at 49–57 (RKKRRQRRR) is the Nuclear localization signal, RNA-binding (TAR), and protein transduction element. The segment at 49-86 (RKKRRQRRRTPQSGEVHQDPVSKQPLSQTRGDPKGPEE) is interaction with the host capping enzyme RNGTT. N6-acetyllysine; by host EP300 and GCN5L2 is present on residues Lys-50 and Lys-51. Arg-52 and Arg-53 each carry asymmetric dimethylarginine; by host PRMT6. Residue Lys-71 forms a Glycyl lysine isopeptide (Lys-Gly) (interchain with G-Cter in ubiquitin) linkage. The short motif at 78–80 (RGD) is the Cell attachment site element. Over residues 79-101 (GDPKGPEESKKKVESKTKTDPSD) the composition is skewed to basic and acidic residues.

This sequence belongs to the lentiviruses Tat family. As to quaternary structure, interacts with host CCNT1. Associates with the P-TEFb complex composed at least of Tat, P-TEFb (CDK9 and CCNT1), TAR RNA, RNA Pol II. Recruits the HATs CREBBP, TAF1/TFIID, EP300, PCAF and GCN5L2. Interacts with host KAT5/Tip60; this interaction targets the latter to degradation. Interacts with the host deacetylase SIRT1. Interacts with host capping enzyme RNGTT; this interaction stimulates RNGTT. Binds to host KDR, and to the host integrins ITGAV/ITGB3 and ITGA5/ITGB1. Interacts with host KPNB1/importin beta-1 without previous binding to KPNA1/importin alpha-1. Interacts with EIF2AK2. Interacts with host nucleosome assembly protein NAP1L1; this interaction may be required for the transport of Tat within the nucleus, since the two proteins interact at the nuclear rim. Interacts with host C1QBP/SF2P32; this interaction involves lysine-acetylated Tat. Interacts with the host chemokine receptors CCR2, CCR3 and CXCR4. Interacts with host DPP4/CD26; this interaction may trigger an anti-proliferative effect. Interacts with host LDLR. Interacts with the host extracellular matrix metalloproteinase MMP1. Interacts with host PRMT6; this interaction mediates Tat's methylation. Interacts with, and is ubiquitinated by MDM2/Hdm2. Interacts with host PSMC3 and HTATIP2. Interacts with STAB1; this interaction may overcome SATB1-mediated repression of IL2 and IL2RA (interleukin) in T cells by binding to the same domain than HDAC1. Interacts (when acetylated) with human CDK13, thereby increasing HIV-1 mRNA splicing and promoting the production of the doubly spliced HIV-1 protein Nef. Interacts with host TBP; this interaction modulates the activity of transcriptional pre-initiation complex. Interacts with host RELA. Interacts with host PLSCR1; this interaction negatively regulates Tat transactivation activity by altering its subcellular distribution. Asymmetrical arginine methylation by host PRMT6 seems to diminish the transactivation capacity of Tat and affects the interaction with host CCNT1. Post-translationally, acetylation by EP300, CREBBP, GCN5L2/GCN5 and PCAF regulates the transactivation activity of Tat. EP300-mediated acetylation of Lys-50 promotes dissociation of Tat from the TAR RNA through the competitive binding to PCAF's bromodomain. In addition, the non-acetylated Tat's N-terminus can also interact with PCAF. PCAF-mediated acetylation of Lys-28 enhances Tat's binding to CCNT1. Lys-50 is deacetylated by SIRT1. In terms of processing, polyubiquitination by host MDM2 does not target Tat to degradation, but activates its transactivation function and fosters interaction with CCNT1 and TAR RNA. Phosphorylated by EIF2AK2 on serine and threonine residues adjacent to the basic region important for TAR RNA binding and function. Phosphorylation of Tat by EIF2AK2 is dependent on the prior activation of EIF2AK2 by dsRNA.

The protein localises to the host nucleus. The protein resides in the host nucleolus. It is found in the host cytoplasm. Its subcellular location is the secreted. Functionally, transcriptional activator that increases RNA Pol II processivity, thereby increasing the level of full-length viral transcripts. Recognizes a hairpin structure at the 5'-LTR of the nascent viral mRNAs referred to as the transactivation responsive RNA element (TAR) and recruits the cyclin T1-CDK9 complex (P-TEFb complex) that will in turn hyperphosphorylate the RNA polymerase II to allow efficient elongation. The CDK9 component of P-TEFb and other Tat-activated kinases hyperphosphorylate the C-terminus of RNA Pol II that becomes stabilized and much more processive. Other factors such as HTATSF1/Tat-SF1, SUPT5H/SPT5, and HTATIP2 are also important for Tat's function. Besides its effect on RNA Pol II processivity, Tat induces chromatin remodeling of proviral genes by recruiting the histone acetyltransferases (HATs) CREBBP, EP300 and PCAF to the chromatin. This also contributes to the increase in proviral transcription rate, especially when the provirus integrates in transcriptionally silent region of the host genome. To ensure maximal activation of the LTR, Tat mediates nuclear translocation of NF-kappa-B by interacting with host RELA. Through its interaction with host TBP, Tat may also modulate transcription initiation. Tat can reactivate a latently infected cell by penetrating in it and transactivating its LTR promoter. In the cytoplasm, Tat is thought to act as a translational activator of HIV-1 mRNAs. In terms of biological role, extracellular circulating Tat can be endocytosed by surrounding uninfected cells via the binding to several surface receptors such as CD26, CXCR4, heparan sulfate proteoglycans (HSPG) or LDLR. Neurons are rarely infected, but they internalize Tat via their LDLR. Through its interaction with nuclear HATs, Tat is potentially able to control the acetylation-dependent cellular gene expression. Modulates the expression of many cellular genes involved in cell survival, proliferation or in coding for cytokines or cytokine receptors. Tat plays a role in T-cell and neurons apoptosis. Tat induced neurotoxicity and apoptosis probably contribute to neuroAIDS. Circulating Tat also acts as a chemokine-like and/or growth factor-like molecule that binds to specific receptors on the surface of the cells, affecting many cellular pathways. In the vascular system, Tat binds to ITGAV/ITGB3 and ITGA5/ITGB1 integrins dimers at the surface of endothelial cells and competes with bFGF for heparin-binding sites, leading to an excess of soluble bFGF. The chain is Protein Tat from Homo sapiens (Human).